A 443-amino-acid polypeptide reads, in one-letter code: Xaa-Pro dipeptidase (443 aa).

Residues Asp244, Asp255, His336, Glu381, and Glu420 each coordinate Mn(2+).

This sequence belongs to the peptidase M24B family. Bacterial-type prolidase subfamily. Mn(2+) serves as cofactor.

It carries out the reaction Xaa-L-Pro dipeptide + H2O = an L-alpha-amino acid + L-proline. In terms of biological role, splits dipeptides with a prolyl residue in the C-terminal position. In Stenotrophomonas maltophilia (strain R551-3), this protein is Xaa-Pro dipeptidase.